The primary structure comprises 396 residues: Flavohemoprotein (396 aa).

Positions 1 to 136 (MLDTQTIAIV…LADVFIQRES (136 aa)) constitute a Globin domain. His-85 contacts heme b. Catalysis depends on charge relay system residues Tyr-95 and Glu-135. The tract at residues 147 to 396 (GGWRTLRRFR…YECFGPHKVI (250 aa)) is reductase. Residues 150-255 (RTLRRFRIIK…APPRGDFFLD (106 aa)) enclose the FAD-binding FR-type domain. FAD is bound by residues Tyr-188 and 204-207 (RQYS). 268-273 (GVGQTP) is an NADP(+) binding site. 389–392 (CFGP) is a binding site for FAD.

This sequence belongs to the globin family. Two-domain flavohemoproteins subfamily. It in the C-terminal section; belongs to the flavoprotein pyridine nucleotide cytochrome reductase family. The cofactor is heme b. FAD is required as a cofactor.

It carries out the reaction 2 nitric oxide + NADPH + 2 O2 = 2 nitrate + NADP(+) + H(+). The catalysed reaction is 2 nitric oxide + NADH + 2 O2 = 2 nitrate + NAD(+) + H(+). Functionally, is involved in NO detoxification in an aerobic process, termed nitric oxide dioxygenase (NOD) reaction that utilizes O(2) and NAD(P)H to convert NO to nitrate, which protects the bacterium from various noxious nitrogen compounds. Therefore, plays a central role in the inducible response to nitrosative stress. The polypeptide is Flavohemoprotein (Yersinia pestis).